The sequence spans 431 residues: Adenylosuccinate synthetase (431 aa).

GTP-binding positions include 13-19 (GDEGKGK) and 41-43 (GHT). Residue aspartate 14 is the Proton acceptor of the active site. 2 residues coordinate Mg(2+): aspartate 14 and glycine 41. Residues 14-17 (DEGK), 39-42 (NAGH), threonine 130, arginine 144, glutamine 225, threonine 240, and arginine 306 each bind IMP. Histidine 42 (proton donor) is an active-site residue. 302–308 (ATTGRQR) is a binding site for substrate. GTP is bound by residues arginine 308, 334 to 336 (KLD), and 416 to 418 (STG).

This sequence belongs to the adenylosuccinate synthetase family. In terms of assembly, homodimer. It depends on Mg(2+) as a cofactor.

It localises to the cytoplasm. It carries out the reaction IMP + L-aspartate + GTP = N(6)-(1,2-dicarboxyethyl)-AMP + GDP + phosphate + 2 H(+). The protein operates within purine metabolism; AMP biosynthesis via de novo pathway; AMP from IMP: step 1/2. Functionally, plays an important role in the de novo pathway of purine nucleotide biosynthesis. Catalyzes the first committed step in the biosynthesis of AMP from IMP. The polypeptide is Adenylosuccinate synthetase (Halorhodospira halophila (strain DSM 244 / SL1) (Ectothiorhodospira halophila (strain DSM 244 / SL1))).